We begin with the raw amino-acid sequence, 68 residues long: Large ribosomal subunit protein uL29c (68 aa).

The protein belongs to the universal ribosomal protein uL29 family.

The protein localises to the plastid. The protein resides in the chloroplast. This Pyropia yezoensis (Susabi-nori) protein is Large ribosomal subunit protein uL29c.